Here is a 161-residue protein sequence, read N- to C-terminus: Lipoprotein signal peptidase (161 aa).

3 helical membrane passes run 9 to 29, 64 to 84, and 96 to 113; these read WLWLSLVVITLDLFSKYLVVE, WQKYLFLTLAIIISFILANVL, and MAYALIIGGAIGNAIDRA. Residues aspartate 120 and aspartate 138 contribute to the active site. The chain crosses the membrane as a helical span at residues 133 to 153; the sequence is VFNIADVAIVMGAGLLILETF.

Belongs to the peptidase A8 family.

It is found in the cell inner membrane. It carries out the reaction Release of signal peptides from bacterial membrane prolipoproteins. Hydrolyzes -Xaa-Yaa-Zaa-|-(S,diacylglyceryl)Cys-, in which Xaa is hydrophobic (preferably Leu), and Yaa (Ala or Ser) and Zaa (Gly or Ala) have small, neutral side chains.. It participates in protein modification; lipoprotein biosynthesis (signal peptide cleavage). This protein specifically catalyzes the removal of signal peptides from prolipoproteins. In Haemophilus ducreyi (strain 35000HP / ATCC 700724), this protein is Lipoprotein signal peptidase.